The following is a 71-amino-acid chain: Palustrin-2AJ2 (71 aa).

The N-terminal stretch at Met-1–Cys-22 is a signal peptide. A propeptide spanning residues Glu-23–Val-40 is cleaved from the precursor. Cys-65 and Cys-71 form a disulfide bridge.

In terms of tissue distribution, expressed by the skin glands.

The protein localises to the secreted. Displays broad-spectrum antibacterial activity against a range of Gram-positive and Gram-negative bacteria. Has low hemolytic activity, low cytotoxicity and low antioxidant activity. This is Palustrin-2AJ2 from Amolops jingdongensis (Chinese torrent frog).